A 414-amino-acid polypeptide reads, in one-letter code: Ornithine aminotransferase (414 aa).

The cysteines at positions 154 and 163 are disulfide-linked. K262 bears the N6-(pyridoxal phosphate)lysine mark.

This sequence belongs to the class-III pyridoxal-phosphate-dependent aminotransferase family. In terms of assembly, homodimer. Pyridoxal 5'-phosphate serves as cofactor. In terms of processing, the disulfide bond between Cys-154 and Cys-163 is reduced by TRX1 which increases OAT catalytic activity.

The protein resides in the cytoplasm. It catalyses the reaction a 2-oxocarboxylate + L-ornithine = L-glutamate 5-semialdehyde + an L-alpha-amino acid. The catalysed reaction is L-ornithine + 2-oxoglutarate = L-glutamate 5-semialdehyde + L-glutamate. It participates in amino-acid biosynthesis; L-proline biosynthesis; L-glutamate 5-semialdehyde from L-ornithine: step 1/1. Its activity is regulated as follows. Unlike for mammalian OATs, activity is increased by TRX1-mediated reduction of the disulfide bond between Cys-154 and Cys-163. Binding to TRX1 may also induce conformational changes that facilitate substrate binding. Functionally, catalyzes the transamination of alpha-ketoglutarate with ornithine or N-acetylornithine and of glutamate-5-semialdehyde with glutamate and alanine. This is Ornithine aminotransferase from Plasmodium chabaudi chabaudi.